The primary structure comprises 38 residues: Photosystem II reaction center protein L (38 aa).

Residues 17-37 traverse the membrane as a helical segment; sequence SLYWGLLLIFVLAVLFSNYFF.

Belongs to the PsbL family. In terms of assembly, PSII is composed of 1 copy each of membrane proteins PsbA, PsbB, PsbC, PsbD, PsbE, PsbF, PsbH, PsbI, PsbJ, PsbK, PsbL, PsbM, PsbT, PsbX, PsbY, PsbZ, Psb30/Ycf12, at least 3 peripheral proteins of the oxygen-evolving complex and a large number of cofactors. It forms dimeric complexes.

It is found in the plastid. The protein localises to the chloroplast thylakoid membrane. Its function is as follows. One of the components of the core complex of photosystem II (PSII). PSII is a light-driven water:plastoquinone oxidoreductase that uses light energy to abstract electrons from H(2)O, generating O(2) and a proton gradient subsequently used for ATP formation. It consists of a core antenna complex that captures photons, and an electron transfer chain that converts photonic excitation into a charge separation. This subunit is found at the monomer-monomer interface and is required for correct PSII assembly and/or dimerization. The protein is Photosystem II reaction center protein L of Psilotum nudum (Whisk fern).